The following is a 776-amino-acid chain: LPS-assembly protein LptD (776 aa).

Residues 1 to 24 (MQHFSRTFLAASIATALFAPYAQA) form the signal peptide.

This sequence belongs to the LptD family. As to quaternary structure, component of the lipopolysaccharide transport and assembly complex. Interacts with LptE and LptA.

Its subcellular location is the cell outer membrane. Its function is as follows. Together with LptE, is involved in the assembly of lipopolysaccharide (LPS) at the surface of the outer membrane. The protein is LPS-assembly protein LptD of Vibrio vulnificus (strain CMCP6).